The primary structure comprises 433 residues: MSKIVKVIGREIIDSRGNPTVEAEVHLEGGFVGMAAAPSGASTGSREALELRDGDKSRFLGKGVLKALEAVNGPIAQALLGKDAKDQAAIDQIMIDLDGTENKSKFGANAILAVSLANAKAAAAAKGMPLYAHIAELNGTAGVYSMPLPMMNIINGGEHADNNVDIQEFMIQPVGAKTLKEAVRMGAEVFHNLAKVLKSKGYNTAVGDEGGFAPNLKSNAEALEVIAEAVAAAGYVLGKDITLAMDCAASEFYDAEKKEYNLKGEGRIFTSNEFSDYLADLTTKFPIVSIEDGLDESDWDGFAYQTKELGKKIQIVGDDLFVTNTKILKRGIDNGIANSILIKFNQIGSLTETLAAIKMAKDAGYTAVISHRSGETEDATIADLAVGTAAGQIKTGSMSRSDRVAKYNQLIRIEEALGAKAPFNGLKEVKGQA.

Residue Gln167 coordinates (2R)-2-phosphoglycerate. Glu209 acts as the Proton donor in catalysis. The Mg(2+) site is built by Asp246, Glu291, and Asp318. Residues Lys343, Arg372, Ser373, and Lys394 each coordinate (2R)-2-phosphoglycerate. The active-site Proton acceptor is Lys343.

The protein belongs to the enolase family. In terms of assembly, component of the RNA degradosome, a multiprotein complex involved in RNA processing and mRNA degradation. Mg(2+) serves as cofactor.

It is found in the cytoplasm. The protein localises to the secreted. It localises to the cell surface. The enzyme catalyses (2R)-2-phosphoglycerate = phosphoenolpyruvate + H2O. The protein operates within carbohydrate degradation; glycolysis; pyruvate from D-glyceraldehyde 3-phosphate: step 4/5. Functionally, catalyzes the reversible conversion of 2-phosphoglycerate (2-PG) into phosphoenolpyruvate (PEP). It is essential for the degradation of carbohydrates via glycolysis. The chain is Enolase from Aeromonas salmonicida (strain A449).